The chain runs to 328 residues: Stress response kinase A (328 aa).

The active-site Proton acceptor is the aspartate 201. Positions 206 and 217 each coordinate Mg(2+). Aspartate 217 is a catalytic residue.

This sequence belongs to the SrkA/RdoA protein kinase family. In terms of assembly, monomer. Mg(2+) serves as cofactor.

It is found in the cytoplasm. It catalyses the reaction L-seryl-[protein] + ATP = O-phospho-L-seryl-[protein] + ADP + H(+). The enzyme catalyses L-threonyl-[protein] + ATP = O-phospho-L-threonyl-[protein] + ADP + H(+). Functionally, a protein kinase that phosphorylates Ser and Thr residues. Probably acts to suppress the effects of stress linked to accumulation of reactive oxygen species. Probably involved in the extracytoplasmic stress response. This chain is Stress response kinase A, found in Salmonella choleraesuis (strain SC-B67).